The primary structure comprises 79 residues: Major outer membrane lipoprotein Lpp 2 (79 aa).

The N-terminal stretch at 1 to 21 is a signal peptide; it reads MNRTNKLILGAVVLGSALLAG. C22 carries N-palmitoyl cysteine lipidation. C22 carries S-diacylglycerol cysteine lipidation. Repeats lie at residues 25–35 and 39–49; these read NAKIDQLSSDV and SAKVDQLSNDV. Positions 28–76 form a coiled coil; the sequence is IDQLSSDVQTLSAKVDQLSNDVNAMRSDIQAAKDDAARANQRLDNKVSR. The interval 60-79 is disordered; the sequence is KDDAARANQRLDNKVSRVRK. K79 carries the post-translational modification N6-murein peptidoglycan lysine.

The protein belongs to the Lpp family. Homotrimer.

It is found in the cell outer membrane. It localises to the secreted. The protein localises to the cell wall. Its function is as follows. A highly abundant outer membrane lipoprotein that controls the distance between the inner and outer membranes. The only protein known to be covalently linked to the peptidoglycan network (PGN). Also non-covalently binds the PGN. The link between the cell outer membrane and PGN contributes to maintenance of the structural and functional integrity of the cell envelope, and maintains the correct distance between the PGN and the outer membrane. The chain is Major outer membrane lipoprotein Lpp 2 from Salmonella paratyphi A (strain ATCC 9150 / SARB42).